Reading from the N-terminus, the 287-residue chain is Pentatricopeptide repeat-containing protein At4g18975, chloroplastic (287 aa).

The N-terminal 34 residues, 1-34 (MALCNLNPTQGIFPLQGLSKSQEFICFSLLQSPR), are a transit peptide targeting the chloroplast. PPR repeat units follow at residues 165–199 (TMGT…HTRS) and 201–235 (PRRL…KVSP).

This sequence belongs to the PPR family. P subfamily.

It localises to the plastid. The protein localises to the chloroplast. The chain is Pentatricopeptide repeat-containing protein At4g18975, chloroplastic from Arabidopsis thaliana (Mouse-ear cress).